The sequence spans 295 residues: Sulfotransferase 1E1 (295 aa).

48–53 (KSGSTW) contributes to the 3'-phosphoadenylyl sulfate binding site. 106–108 (KTH) contributes to the substrate binding site. The Proton acceptor role is filled by His-108. The 3'-phosphoadenylyl sulfate site is built by Arg-130 and Ser-138. Residue Ser-156 is modified to Phosphoserine. Residues Tyr-193, 227–232 (TSFQEM), and 257–259 (RKG) each bind 3'-phosphoadenylyl sulfate.

It belongs to the sulfotransferase 1 family. In terms of assembly, homodimer. In terms of tissue distribution, liver of young mature males and uterus.

Its subcellular location is the cytoplasm. It localises to the cytosol. It carries out the reaction estrone + 3'-phosphoadenylyl sulfate = estrone 3-sulfate + adenosine 3',5'-bisphosphate + H(+). The enzyme catalyses (24S)-hydroxycholesterol + 3'-phosphoadenylyl sulfate = (24S)-hydroxycholesterol 3-sulfate + adenosine 3',5'-bisphosphate + H(+). The catalysed reaction is 17beta-estradiol + 3'-phosphoadenylyl sulfate = 17beta-estradiol 3-sulfate + adenosine 3',5'-bisphosphate + H(+). It catalyses the reaction 3beta-hydroxyandrost-5-en-17-one + 3'-phosphoadenylyl sulfate = dehydroepiandrosterone 3-sulfate + adenosine 3',5'-bisphosphate + H(+). It carries out the reaction 4-ethylphenol + 3'-phosphoadenylyl sulfate = 4-ethylphenyl sulfate + adenosine 3',5'-bisphosphate + H(+). With respect to regulation, inhibited by estradiol. Functionally, sulfotransferase that utilizes 3'-phospho-5'-adenylyl sulfate (PAPS) as sulfonate donor to catalyze the sulfate conjugation of estradiol and estrone. Is a key enzyme in estrogen homeostasis, the sulfation of estrogens leads to their inactivation. Also sulfates dehydroepiandrosterone (DHEA), pregnenolone, (24S)-hydroxycholesterol and xenobiotic compounds like ethinylestradiol, equalenin, diethyl stilbesterol and 1-naphthol at significantly lower efficiency. Does not sulfonate cortisol, testosterone and dopamine. May play a role in gut microbiota-host metabolic interaction. O-sulfonates 4-ethylphenol (4-EP), a dietary tyrosine-derived metabolite produced by gut bacteria. The product 4-EPS crosses the blood-brain barrier and may negatively regulate oligodendrocyte maturation and myelination, affecting the functional connectivity of different brain regions associated with the limbic system. In Rattus norvegicus (Rat), this protein is Sulfotransferase 1E1.